Here is a 359-residue protein sequence, read N- to C-terminus: Chorismate synthase (359 aa).

2 residues coordinate NADP(+): R48 and R54. Residues 129 to 131 (RSS), 241 to 242 (NA), G285, 300 to 304 (KPTSS), and R326 each bind FMN.

This sequence belongs to the chorismate synthase family. As to quaternary structure, homotetramer. FMNH2 serves as cofactor.

The enzyme catalyses 5-O-(1-carboxyvinyl)-3-phosphoshikimate = chorismate + phosphate. It functions in the pathway metabolic intermediate biosynthesis; chorismate biosynthesis; chorismate from D-erythrose 4-phosphate and phosphoenolpyruvate: step 7/7. Its function is as follows. Catalyzes the anti-1,4-elimination of the C-3 phosphate and the C-6 proR hydrogen from 5-enolpyruvylshikimate-3-phosphate (EPSP) to yield chorismate, which is the branch point compound that serves as the starting substrate for the three terminal pathways of aromatic amino acid biosynthesis. This reaction introduces a second double bond into the aromatic ring system. The protein is Chorismate synthase of Afipia carboxidovorans (strain ATCC 49405 / DSM 1227 / KCTC 32145 / OM5) (Oligotropha carboxidovorans).